The primary structure comprises 297 residues: N-acetylneuraminate lyase (297 aa).

Aceneuramate is bound by residues S47 and T48. The active-site Proton donor is Y137. The Schiff-base intermediate with substrate role is filled by K165. Aceneuramate-binding residues include T167, G189, D191, E192, and S208.

Belongs to the DapA family. NanA subfamily. As to quaternary structure, homotetramer.

The protein resides in the cytoplasm. It catalyses the reaction aceneuramate = aldehydo-N-acetyl-D-mannosamine + pyruvate. Its pathway is amino-sugar metabolism; N-acetylneuraminate degradation; D-fructose 6-phosphate from N-acetylneuraminate: step 1/5. In terms of biological role, catalyzes the reversible aldol cleavage of N-acetylneuraminic acid (sialic acid; Neu5Ac) to form pyruvate and N-acetylmannosamine (ManNAc) via a Schiff base intermediate. This chain is N-acetylneuraminate lyase, found in Salmonella agona (strain SL483).